The sequence spans 315 residues: Periplasmic [NiFeSe] hydrogenase small subunit (315 aa).

The segment at residues 1-32 is a signal peptide (tat-type signal); that stretch reads MSLSRREFVKLCSAGVAGLGISQIYHPGIVHA. The [4Fe-4S] cluster site is built by Cys-50, Cys-53, Cys-158, Cys-196, His-240, Cys-243, Cys-263, Cys-269, Cys-278, Cys-290, Cys-296, and Cys-299.

It belongs to the [NiFe]/[NiFeSe] hydrogenase small subunit family. Heterodimer of a large and a small subunit. [4Fe-4S] cluster is required as a cofactor. Post-translationally, predicted to be exported by the Tat system. The position of the signal peptide cleavage has been experimentally proven.

It localises to the periplasm. The enzyme catalyses H2 + A = AH2. This chain is Periplasmic [NiFeSe] hydrogenase small subunit, found in Desulfomicrobium baculatum (Desulfovibrio baculatus).